A 519-amino-acid chain; its full sequence is Probable U3 small nucleolar RNA-associated protein 18 (519 aa).

9 WD repeats span residues 26–66 (DKEN…MFDT), 71–111 (GAKD…RLMI), 216–254 (SHSG…NPLV), 259–298 (LRSS…VQKV), 306–345 (NFQP…FATS), 347–386 (KIEG…VVRR), 390–429 (QDGV…ADAA), 438–479 (NITF…VFRN), and 485–519 (TPLG…AHYD).

The protein belongs to the WD repeat UTP18 family. As to quaternary structure, component of the ribosomal small subunit (SSU) processome.

It localises to the nucleus. Its subcellular location is the nucleolus. Involved in nucleolar processing of pre-18S ribosomal RNA. The chain is Probable U3 small nucleolar RNA-associated protein 18 from Schizosaccharomyces pombe (strain 972 / ATCC 24843) (Fission yeast).